Reading from the N-terminus, the 230-residue chain is MREPRPLIALDFPSFDDVKSFLAQFPPEEKLYVKIGMELYYAVGPEIVRYVKGLGHSVFLDLKLHDIPNTVKSAMKVLSDLGVDMTNVHAAGGVEMMKAAREGLGKGPKLIAVTQLTSTSEEQMHDFQNIQTSLAESVVHYAKKTAEAGLDGVVCSAHEVEAIKSATSNDFVCLTPGIRPAGSAIGDQKRIMTPADARTIGSDYIVLGRPITRAEDPIAAYQAIKAEWNG.

Substrate is bound by residues Asp-11, Lys-34, 61–70 (DLKLHDIPNT), Thr-117, Arg-179, Gln-188, Gly-208, and Arg-209. Lys-63 functions as the Proton donor in the catalytic mechanism.

This sequence belongs to the OMP decarboxylase family. Type 1 subfamily. As to quaternary structure, homodimer.

It carries out the reaction orotidine 5'-phosphate + H(+) = UMP + CO2. Its pathway is pyrimidine metabolism; UMP biosynthesis via de novo pathway; UMP from orotate: step 2/2. Catalyzes the decarboxylation of orotidine 5'-monophosphate (OMP) to uridine 5'-monophosphate (UMP). This is Orotidine 5'-phosphate decarboxylase from Streptococcus mutans serotype c (strain ATCC 700610 / UA159).